A 168-amino-acid chain; its full sequence is HTH-type transcriptional regulator IscR (168 aa).

In terms of domain architecture, HTH rrf2-type spans 2–131; sequence KLTSKGRYAV…NNITLGELMS (130 aa). The segment at residues 28 to 51 is a DNA-binding region (H-T-H motif); it reads LADISERQGISLSYLEQLFSKLRK. [2Fe-2S] cluster is bound by residues Cys92, Cys98, and Cys104.

It depends on [2Fe-2S] cluster as a cofactor.

In terms of biological role, regulates the transcription of several operons and genes involved in the biogenesis of Fe-S clusters and Fe-S-containing proteins. The protein is HTH-type transcriptional regulator IscR of Vibrio vulnificus (strain CMCP6).